Here is a 509-residue protein sequence, read N- to C-terminus: MELEAKLHEIRKPIMVLGTSSGAGKSLTVTAICRILKNLGEEPIPFKGQNMSNNAWVDWEGGEMAYSQALQAFACGINPSAEMNPILLKPQGNSISEVIHLGKSIGITTASNYYKDWFIPGWEVIKKSLSSIYEKTPNCRLIIEGAGSPVEMNLIHRDLTNLRVAKYLNANCILVTDIERGGVFAQIIGTLELMKPEEKKLIKGIIINRFRGDLSLFAEGKKWIESKTQIPIIGIIPWLNDSFPPEDSLDLLEKKSRHTTAEIKVGIIKLPSISNFSDFDPLENEKSILIEWVRESQNLKKFDFIILPGSKQTIKDQIYLKESGLSQDIKEYSNNKGNIIGICGGLQMLGTSLEDPFFKEGSKSCLEQKIKGIGLLPLKTTFFEKKLTRQISSESLWPCHSKINGFEIHNGKTELVESENLLKIRPIFKDLDLGWYTEKKEGGTIAGTYIHGIFENDNWRDQYINLIRKSKNLPIFNKKSISYKKKRESIIDNLANEFDKHLNITSLLN.

Residues 262-459 form the GATase cobBQ-type domain; sequence EIKVGIIKLP…IHGIFENDNW (198 aa). The Nucleophile role is filled by C343. H451 is a catalytic residue.

The protein belongs to the CobB/CobQ family. CobQ subfamily.

It participates in cofactor biosynthesis; adenosylcobalamin biosynthesis. In terms of biological role, catalyzes amidations at positions B, D, E, and G on adenosylcobyrinic A,C-diamide. NH(2) groups are provided by glutamine, and one molecule of ATP is hydrogenolyzed for each amidation. This chain is Cobyric acid synthase, found in Prochlorococcus marinus (strain AS9601).